The chain runs to 130 residues: Ribosome-binding factor A (130 aa).

The protein belongs to the RbfA family. In terms of assembly, monomer. Binds 30S ribosomal subunits, but not 50S ribosomal subunits or 70S ribosomes.

The protein resides in the cytoplasm. One of several proteins that assist in the late maturation steps of the functional core of the 30S ribosomal subunit. Associates with free 30S ribosomal subunits (but not with 30S subunits that are part of 70S ribosomes or polysomes). Required for efficient processing of 16S rRNA. May interact with the 5'-terminal helix region of 16S rRNA. The polypeptide is Ribosome-binding factor A (Prochlorococcus marinus (strain AS9601)).